Here is a 123-residue protein sequence, read N- to C-terminus: Holo-[acyl-carrier-protein] synthase (123 aa).

The Mg(2+) site is built by Asp9 and Glu57.

The protein belongs to the P-Pant transferase superfamily. AcpS family. Requires Mg(2+) as cofactor.

It is found in the cytoplasm. The enzyme catalyses apo-[ACP] + CoA = holo-[ACP] + adenosine 3',5'-bisphosphate + H(+). Its function is as follows. Transfers the 4'-phosphopantetheine moiety from coenzyme A to a Ser of acyl-carrier-protein. The sequence is that of Holo-[acyl-carrier-protein] synthase from Streptomyces coelicolor (strain ATCC BAA-471 / A3(2) / M145).